The following is a 157-amino-acid chain: Transcription elongation factor GreA (157 aa).

A coiled-coil region spans residues 13–75 (RARLEAELEE…EIKSILARAQ (63 aa)).

Belongs to the GreA/GreB family.

Functionally, necessary for efficient RNA polymerase transcription elongation past template-encoded arresting sites. The arresting sites in DNA have the property of trapping a certain fraction of elongating RNA polymerases that pass through, resulting in locked ternary complexes. Cleavage of the nascent transcript by cleavage factors such as GreA or GreB allows the resumption of elongation from the new 3'terminus. GreA releases sequences of 2 to 3 nucleotides. The protein is Transcription elongation factor GreA of Roseiflexus castenholzii (strain DSM 13941 / HLO8).